A 108-amino-acid chain; its full sequence is Putative pterin-4-alpha-carbinolamine dehydratase (108 aa).

This sequence belongs to the pterin-4-alpha-carbinolamine dehydratase family.

It catalyses the reaction (4aS,6R)-4a-hydroxy-L-erythro-5,6,7,8-tetrahydrobiopterin = (6R)-L-erythro-6,7-dihydrobiopterin + H2O. This Chromobacterium violaceum (strain ATCC 12472 / DSM 30191 / JCM 1249 / CCUG 213 / NBRC 12614 / NCIMB 9131 / NCTC 9757 / MK) protein is Putative pterin-4-alpha-carbinolamine dehydratase.